A 308-amino-acid polypeptide reads, in one-letter code: Probable GTP 3',8-cyclase (308 aa).

In terms of domain architecture, Radical SAM core spans 4 to 222; sequence RFGRPLEDLR…KKLIRKKHFR (219 aa). Arginine 13 contacts GTP. Residues cysteine 20, cysteine 24, and cysteine 27 each contribute to the [4Fe-4S] cluster site. A GTP-binding site is contributed by lysine 60. Glycine 64 contacts S-adenosyl-L-methionine. Threonine 90 serves as a coordination point for GTP. An S-adenosyl-L-methionine-binding site is contributed by serine 114. GTP is bound at residue lysine 151. Residues cysteine 245 and cysteine 248 each contribute to the [4Fe-4S] cluster site. A GTP-binding site is contributed by 250–252; the sequence is RIR. Cysteine 262 serves as a coordination point for [4Fe-4S] cluster.

Belongs to the radical SAM superfamily. MoaA family. The cofactor is [4Fe-4S] cluster.

It carries out the reaction GTP + AH2 + S-adenosyl-L-methionine = (8S)-3',8-cyclo-7,8-dihydroguanosine 5'-triphosphate + 5'-deoxyadenosine + L-methionine + A + H(+). Its pathway is cofactor biosynthesis; molybdopterin biosynthesis. Catalyzes the cyclization of GTP to (8S)-3',8-cyclo-7,8-dihydroguanosine 5'-triphosphate. In Saccharolobus solfataricus (strain ATCC 35092 / DSM 1617 / JCM 11322 / P2) (Sulfolobus solfataricus), this protein is Probable GTP 3',8-cyclase.